A 642-amino-acid polypeptide reads, in one-letter code: Threonine--tRNA ligase (642 aa).

The region spanning 1–61 is the TGS domain; that stretch reads MPIITLPDGS…EHDASLEIIT (61 aa). The segment at 244–535 is catalytic; sequence DHRKIGKQLD…LIEEYAGFFP (292 aa). The Zn(2+) site is built by Cys335, His386, and His512.

This sequence belongs to the class-II aminoacyl-tRNA synthetase family. As to quaternary structure, homodimer. Zn(2+) is required as a cofactor.

Its subcellular location is the cytoplasm. It catalyses the reaction tRNA(Thr) + L-threonine + ATP = L-threonyl-tRNA(Thr) + AMP + diphosphate + H(+). Catalyzes the attachment of threonine to tRNA(Thr) in a two-step reaction: L-threonine is first activated by ATP to form Thr-AMP and then transferred to the acceptor end of tRNA(Thr). Also edits incorrectly charged L-seryl-tRNA(Thr). In Vibrio cholerae serotype O1 (strain M66-2), this protein is Threonine--tRNA ligase.